The following is a 390-amino-acid chain: Ribonucleoside-diphosphate reductase subunit M2 (390 aa).

Position 20 is a phosphoserine (Ser20). Thr33 is modified (phosphothreonine). Positions 49 to 51 match the Cy motif; the sequence is RRI. Residues Asp139, Glu170, and His173 each contribute to the Fe cation site. The active site involves Tyr177. 3 residues coordinate Fe cation: Glu233, Glu267, and His270.

Belongs to the ribonucleoside diphosphate reductase small chain family. Heterodimer of a large and a small subunit. Interacts (via Cy motif and when phosphorylated at Thr-33) with CCNF; the interaction occurs exclusively in G2 and early M. Fe cation is required as a cofactor. In terms of processing, phosphorylation on Ser-20 relieves the inhibitory effect on Wnt signaling. Phosphorylated on Thr-33 by CDK1 and CDK2; predominantly in G2 and M phase. Ubiquitinated by the SCF(CCNF) E3 ubiquitin-protein ligase complex; leading to its degradation by the proteasome.

The protein localises to the cytoplasm. It is found in the nucleus. The catalysed reaction is a 2'-deoxyribonucleoside 5'-diphosphate + [thioredoxin]-disulfide + H2O = a ribonucleoside 5'-diphosphate + [thioredoxin]-dithiol. Functionally, provides the precursors necessary for DNA synthesis. Catalyzes the biosynthesis of deoxyribonucleotides from the corresponding ribonucleotides. Inhibits Wnt signaling. In Rattus norvegicus (Rat), this protein is Ribonucleoside-diphosphate reductase subunit M2 (Rrm2).